Reading from the N-terminus, the 194-residue chain is Probable GTP-binding protein EngB (194 aa).

The region spanning 22–194 (DLPEYALAGR…AWQFIKEGME (173 aa)) is the EngB-type G domain. Residues 30–37 (GRSNVGKS), 57–61 (GKTQT), 75–78 (DVPG), 142–145 (TKAD), and 174–176 (FSS) contribute to the GTP site. Mg(2+) contacts are provided by serine 37 and threonine 59.

Belongs to the TRAFAC class TrmE-Era-EngA-EngB-Septin-like GTPase superfamily. EngB GTPase family. Mg(2+) is required as a cofactor.

Its function is as follows. Necessary for normal cell division and for the maintenance of normal septation. This chain is Probable GTP-binding protein EngB, found in Listeria monocytogenes serovar 1/2a (strain ATCC BAA-679 / EGD-e).